The chain runs to 1086 residues: MDSITNGESFYVYDWRVVSTEKDTNYFDRSGNRKKWTEITLMLRAYCVDANGATVCLRMGQVKTKLYVEFPENYDLNPRRWSAIRTILKDAIYCKNDKCDSNIQRVSLQPLYGAKQVRTYVAIEFTSEVGKRAFINKISGKCDQRTKRTSAKFPDNVTGDQLRFHWMNVPTELQVLVNAKLPFAGWIETGRLYSPKDRKTRCDREYSVDIKQVRTSTSMACVTPPLKTFAWDIEAKINDMSSPGTHEDDEVYMISISVSDNTDHLILIAPDGCGEAMKRSMGAGDELTVHVCPNEVSLLLEFNKVCRSIGAVARMGWNVNRFDCVVLMARANRLNCSTTLLDLGLALDVPGCVSTTAGRTFGRFSPNDAIYFDTHGVLCLDVMEMFKSTYTKLPKYSLQYVSQKFLGTTKDPVTLKDLNELHSRLMLDDDHTNALRAVVSKYCVVDSRLTLQLCQKCAHMTSLTEMARITNTPITMVHYQKQQRRMFHLMFSECARKGVAMQDDFGRDRRLTMLDEDSTDGSSNVDNKRQLNYSGAYVKDPEPGLYNMVGSLDVNSMYPTLMIAYNLCYSTVIDDDAHSDYTDENFEIVEWEDHVGCEHDPNIKEREKLKSIFEDLAKVEKRKFIGVQPITKYFKPTSTTRKPVDDVEEHSECNGFTDDNYNDSPVSSIKLSSVDLQRAAIRLKVLKSRMSGGSKLCAKQRVRILKTRRGLLPDLVEYFLDARRKVRAEMKNVSDPLARDILDKSQLAYKVTANSVYGSTGAVNGKLPCQNVAKVTTALGRKTILQSIDIAQRDRSVSTIYSDTDSMYVQLGDEAGDDPWKFVRELAAHITSKLRKPMVIEAEDDIHAKVLFLGKKCYIGRKLFRDGSVSRELDWHGVITVRRDHSQYVKDVYRKAVHRVFADCTMEQFKHTIFEQALTLMQRRVSYERLTKTSEVRNVGDCCTITLCKKTMSWMLGDYKVPQHSHHDILYNTKRDALKTYYVSKLPAPARLSVSLVDRGRPAIEGGRIEFLNIRISNPDDLPIEEISYFKEHGGIVDRLYYIKQIINPLTKVSEAVWKRSDTVIGAVTPILNYDKVVRQLDTMFN.

A disordered region spans residues 638 to 657 (STTRKPVDDVEEHSECNGFT).

Belongs to the DNA polymerase type-B family.

It catalyses the reaction DNA(n) + a 2'-deoxyribonucleoside 5'-triphosphate = DNA(n+1) + diphosphate. Functionally, replicates the viral genome. Host DNA polymerases cannot substitute for the viral enzyme in this process. The polypeptide is DNA polymerase (Noctuidae (owlet moths)).